The primary structure comprises 236 residues: Orotidine 5'-phosphate decarboxylase (236 aa).

Residues Asp-16, Lys-38, 65–74, Thr-123, Arg-184, Gln-193, Gly-213, and Arg-214 each bind substrate; that span reads DLKLHDIGNT. Lys-67 functions as the Proton donor in the catalytic mechanism.

Belongs to the OMP decarboxylase family. Type 1 subfamily. As to quaternary structure, homodimer.

It catalyses the reaction orotidine 5'-phosphate + H(+) = UMP + CO2. It participates in pyrimidine metabolism; UMP biosynthesis via de novo pathway; UMP from orotate: step 2/2. In terms of biological role, catalyzes the decarboxylation of orotidine 5'-monophosphate (OMP) to uridine 5'-monophosphate (UMP). This chain is Orotidine 5'-phosphate decarboxylase, found in Methylobacterium nodulans (strain LMG 21967 / CNCM I-2342 / ORS 2060).